Reading from the N-terminus, the 387-residue chain is 3-ketoacyl-CoA thiolase (387 aa).

Residue Cys-91 is the Acyl-thioester intermediate of the active site. Catalysis depends on proton acceptor residues His-343 and Cys-373.

Belongs to the thiolase-like superfamily. Thiolase family. Heterotetramer of two alpha chains (FadB) and two beta chains (FadA).

The protein localises to the cytoplasm. The enzyme catalyses an acyl-CoA + acetyl-CoA = a 3-oxoacyl-CoA + CoA. Its pathway is lipid metabolism; fatty acid beta-oxidation. In terms of biological role, catalyzes the final step of fatty acid oxidation in which acetyl-CoA is released and the CoA ester of a fatty acid two carbons shorter is formed. In Shewanella sp. (strain W3-18-1), this protein is 3-ketoacyl-CoA thiolase.